Reading from the N-terminus, the 128-residue chain is Small ribosomal subunit protein eS8 (128 aa).

Residues 1–31 (MAWYQGNDLRKPTGGKKTRHRKKRKHELGRP) form a disordered region. The segment covering 13 to 27 (TGGKKTRHRKKRKHE) has biased composition (basic residues).

It belongs to the eukaryotic ribosomal protein eS8 family. Part of the 30S ribosomal subunit.

The protein is Small ribosomal subunit protein eS8 of Staphylothermus marinus (strain ATCC 43588 / DSM 3639 / JCM 9404 / F1).